The following is a 270-amino-acid chain: Ribosomal RNA small subunit methyltransferase A (270 aa).

S-adenosyl-L-methionine is bound by residues Asn16, Leu18, Gly43, Glu64, Asp89, and Asn110.

It belongs to the class I-like SAM-binding methyltransferase superfamily. rRNA adenine N(6)-methyltransferase family. RsmA subfamily.

It is found in the cytoplasm. The catalysed reaction is adenosine(1518)/adenosine(1519) in 16S rRNA + 4 S-adenosyl-L-methionine = N(6)-dimethyladenosine(1518)/N(6)-dimethyladenosine(1519) in 16S rRNA + 4 S-adenosyl-L-homocysteine + 4 H(+). Functionally, specifically dimethylates two adjacent adenosines (A1518 and A1519) in the loop of a conserved hairpin near the 3'-end of 16S rRNA in the 30S particle. May play a critical role in biogenesis of 30S subunits. The sequence is that of Ribosomal RNA small subunit methyltransferase A from Pseudomonas fluorescens (strain ATCC BAA-477 / NRRL B-23932 / Pf-5).